A 689-amino-acid polypeptide reads, in one-letter code: Glycine--tRNA ligase beta subunit (689 aa).

This sequence belongs to the class-II aminoacyl-tRNA synthetase family. As to quaternary structure, tetramer of two alpha and two beta subunits.

It localises to the cytoplasm. It catalyses the reaction tRNA(Gly) + glycine + ATP = glycyl-tRNA(Gly) + AMP + diphosphate. This is Glycine--tRNA ligase beta subunit from Coxiella burnetii (strain Dugway 5J108-111).